The primary structure comprises 713 residues: Cyclomaltodextrin glucanotransferase (713 aa).

The first 27 residues, 1–27, serve as a signal peptide directing secretion; the sequence is MKKFLKSTAALALGLSLTFGLFSPAQA. The interval 28-165 is A1; it reads APDTSVSNKQ…NIKVIIDFAP (138 aa). Positions 54, 56, 59, and 60 each coordinate Ca(2+). C70 and C77 are joined by a disulfide. Positions 78 and 80 each coordinate Ca(2+). Residue 127-128 participates in substrate binding; the sequence is YW. A Ca(2+)-binding site is contributed by N166. Residues 166–229 form a b region; the sequence is NHTSPASSDQ…NLYDLADLNH (64 aa). Substrate is bound by residues H167 and 172–174; that span reads SSD. I217 contributes to the Ca(2+) binding site. 220-223 provides a ligand contact to substrate; it reads NLYD. D226 is a Ca(2+) binding site. An A2 region spans residues 230–433; it reads NNSTVDVYLK…LRKCNPAIAY (204 aa). R254 is a substrate binding site. The active-site Nucleophile is D256. 259–260 is a substrate binding site; sequence KH. H260 serves as a coordination point for Ca(2+). Residue E284 is the Proton donor of the active site. Residue A342 participates in Ca(2+) binding. The substrate site is built by H354, D398, and R402. The segment at 434–522 is c; the sequence is GSTQERWINN…GTAVWQYTAA (89 aa). A d region spans residues 523-609; sequence TATPTIGHVG…SNVYDNFEVL (87 aa). An IPT/TIG domain is found at 526-607; it reads PTIGHVGPMM…TASNVYDNFE (82 aa). D604 contributes to the Ca(2+) binding site. Residues 608–713 form the CBM20 domain; it reads VLSGDQVSVR…TATINVNWQP (106 aa). An e region spans residues 610 to 713; the sequence is SGDQVSVRFV…TATINVNWQP (104 aa).

Belongs to the glycosyl hydrolase 13 family. As to quaternary structure, monomer. Ca(2+) is required as a cofactor.

It is found in the secreted. The catalysed reaction is Cyclizes part of a (1-&gt;4)-alpha-D-glucan chain by formation of a (1-&gt;4)-alpha-D-glucosidic bond.. In Niallia circulans (Bacillus circulans), this protein is Cyclomaltodextrin glucanotransferase (cgt).